Here is a 342-residue protein sequence, read N- to C-terminus: Deoxyguanosinetriphosphate triphosphohydrolase-like protein (342 aa).

Residues arginine 75–valine 190 enclose the HD domain.

Belongs to the dGTPase family. Type 2 subfamily.

This chain is Deoxyguanosinetriphosphate triphosphohydrolase-like protein, found in Clostridium perfringens (strain SM101 / Type A).